Consider the following 184-residue polypeptide: Probable RNA 2'-phosphotransferase (184 aa).

It belongs to the KptA/TPT1 family.

Functionally, removes the 2'-phosphate from RNA via an intermediate in which the phosphate is ADP-ribosylated by NAD followed by a presumed transesterification to release the RNA and generate ADP-ribose 1''-2''-cyclic phosphate (APPR&gt;P). May function as an ADP-ribosylase. The sequence is that of Probable RNA 2'-phosphotransferase from Escherichia coli O6:K15:H31 (strain 536 / UPEC).